Reading from the N-terminus, the 165-residue chain is Phosphopantetheine adenylyltransferase (165 aa).

Residue Ser-10 coordinates substrate. ATP-binding positions include Ser-10–Phe-11 and His-18. Lys-42, Leu-74, and Arg-88 together coordinate substrate. ATP contacts are provided by residues Gly-89 to Arg-91, Glu-99, and Trp-124 to Thr-130.

It belongs to the bacterial CoaD family. Homohexamer. Mg(2+) serves as cofactor.

The protein localises to the cytoplasm. The enzyme catalyses (R)-4'-phosphopantetheine + ATP + H(+) = 3'-dephospho-CoA + diphosphate. The protein operates within cofactor biosynthesis; coenzyme A biosynthesis; CoA from (R)-pantothenate: step 4/5. In terms of biological role, reversibly transfers an adenylyl group from ATP to 4'-phosphopantetheine, yielding dephospho-CoA (dPCoA) and pyrophosphate. This is Phosphopantetheine adenylyltransferase from Syntrophus aciditrophicus (strain SB).